The primary structure comprises 733 residues: Protein PAT1 homolog 2 (733 aa).

Disordered stretches follow at residues 42-75 (LDQE…PEAL) and 337-366 (LHPQ…PDPY). Basic and acidic residues predominate over residues 49 to 59 (EPVKLEDDHTK). Residues 346–356 (SQRQRPQSSSR) show a composition bias toward low complexity.

The protein belongs to the PAT1 family. Interacts with ribonucleoprotein complex components. Interacts with cpeb. Oocyte-specific protein. Expressed throughout oogenesis but is not detectable in eggs, embryos, nor in adult tissues (at protein level).

It is found in the cytoplasm. Its subcellular location is the nucleus. RNA-binding protein that acts as a translational repressor. When overexpressed, able to disperse P-bodies. This Xenopus laevis (African clawed frog) protein is Protein PAT1 homolog 2 (patl2).